The primary structure comprises 135 residues: Basic phospholipase A2 KBf-VA (135 aa).

Cystine bridges form between Cys-28/Cys-87, Cys-42/Cys-134, Cys-44/Cys-60, Cys-59/Cys-115, Cys-66/Cys-108, Cys-76/Cys-101, and Cys-94/Cys-106. Residues Tyr-43, Gly-45, and Gly-47 each coordinate Ca(2+). His-63 is a catalytic residue. Asp-64 serves as a coordination point for Ca(2+). The active site involves Asp-109.

This sequence belongs to the phospholipase A2 family. Group I subfamily. D49 sub-subfamily. Requires Ca(2+) as cofactor. As to expression, expressed by the venom gland.

It is found in the secreted. It carries out the reaction a 1,2-diacyl-sn-glycero-3-phosphocholine + H2O = a 1-acyl-sn-glycero-3-phosphocholine + a fatty acid + H(+). Snake venom phospholipase A2 (PLA2) that inhibits neuromuscular transmission by blocking acetylcholine release from the nerve termini. PLA2 catalyzes the calcium-dependent hydrolysis of the 2-acyl groups in 3-sn-phosphoglycerides. The sequence is that of Basic phospholipase A2 KBf-VA from Bungarus fasciatus (Banded krait).